The primary structure comprises 684 residues: Protein-glutamine gamma-glutamyltransferase 4 (684 aa).

Active-site residues include Cys268, His327, and Asp350. Residues Asn390, Asp392, Glu442, and Glu447 each coordinate Ca(2+).

Belongs to the transglutaminase superfamily. Transglutaminase family. As to quaternary structure, homodimer. Ca(2+) is required as a cofactor. As to expression, prostate.

It catalyses the reaction L-glutaminyl-[protein] + L-lysyl-[protein] = [protein]-L-lysyl-N(6)-5-L-glutamyl-[protein] + NH4(+). Functionally, associated with the mammalian reproductive process. Catalyzes the cross-linking of proteins and the conjugation of polyamines to specific proteins in the seminal tract. The protein is Protein-glutamine gamma-glutamyltransferase 4 (TGM4) of Homo sapiens (Human).